Reading from the N-terminus, the 696-residue chain is D-(-)-3-hydroxybutyrate oligomer hydrolase (696 aa).

An N-terminal signal peptide occupies residues 1–26 (MDTHGWGSRILVGAALAALTMLGACN). Catalysis depends on serine 309, which acts as the Charge relay system.

It belongs to the D-(-)-3-hydroxybutyrate oligomer hydrolase family.

It is found in the secreted. It catalyses the reaction (3R)-hydroxybutanoate dimer + H2O = 2 (R)-3-hydroxybutanoate + H(+). Its pathway is lipid metabolism; butanoate metabolism. In terms of biological role, participates in the degradation of poly-3-hydroxybutyrate (PHB). It works downstream of poly(3-hydroxybutyrate) depolymerase, hydrolyzing D(-)-3-hydroxybutyrate oligomers of various length (3HB-oligomers) into 3HB-monomers. The sequence is that of D-(-)-3-hydroxybutyrate oligomer hydrolase from Burkholderia vietnamiensis (strain G4 / LMG 22486) (Burkholderia cepacia (strain R1808)).